The following is a 738-amino-acid chain: Sporulation kinase E (738 aa).

4 PAS domains span residues 29 to 99, 150 to 220, 271 to 342, and 391 to 462; these read ELNQ…FKKG, NEQL…NRKG, SEER…YGEI, and SELK…FDEM. One can recognise a Histidine kinase domain in the interval 523-729; sequence GIAHEIRNPM…VFHITLPVRQ (207 aa). Phosphohistidine; by autocatalysis is present on histidine 526.

It catalyses the reaction ATP + protein L-histidine = ADP + protein N-phospho-L-histidine.. In terms of biological role, phosphorylates the sporulation-regulatory protein spo0A under biofilm growth conditions. Also able to weakly phosphorylate spo0F. In Bacillus subtilis (strain 168), this protein is Sporulation kinase E (kinE).